A 407-amino-acid polypeptide reads, in one-letter code: Patatin-like protein 2 (407 aa).

Residues 22 to 228 enclose the PNPLA domain; it reads LSIDGGGIRG…AANNPALLAI (207 aa). Positions 26–31 match the GXGXXG motif; sequence GGGIRG. Positions 64-68 match the GXSXG motif; it reads GTSTG. S66 acts as the Nucleophile in catalysis. D215 functions as the Proton acceptor in the catalytic mechanism. Positions 215-217 match the DGA/G motif; sequence DGG. S398 is modified (phosphoserine).

Belongs to the patatin family. In terms of tissue distribution, expressed specifically in roots.

The protein localises to the cytoplasm. Functionally, possesses non-specific lipolytic acyl hydrolase (LAH) activity. Catalyzes the hydrolysis of the galactolipids monogalactosyldiacylglycerol (MGDG) and digalactosyldiacylglycerol (DGDG), and less efficiently the phoshpolipids phosphatidylcholine (PC), phosphatidylethanolamine (PE), phosphatidylglycerol (PG), phosphatidic acid (PA), phosphatidylserine (PS) and phosphatidylinositol (PI). Favors the release of fatty acid at the sn-1 position for PC or PE and the sn-2 position for PG, PA, PS and PI. Negatively affects disease resistance to the necrotic fungal pathogen Botrytis cinerea and the avirulent bacteria Pseudomonas syringae by promoting cell death and reducing the efficiency of the hypersensitive response, respectively. However, PLP2 contributes to resistance to cucumber mosaic virus (CMV), an obligate parasite inducing hypersensitive response. May negatively regulate oxylipin production, possibly via participating in membrane repair that includes removal of oxidatively modified lipids. The sequence is that of Patatin-like protein 2 (PLP2) from Arabidopsis thaliana (Mouse-ear cress).